The primary structure comprises 489 residues: CUGBP Elav-like family member 1-A (489 aa).

RRM domains are found at residues 16 to 99 (IKMF…PADS), 108 to 188 (RKLF…FADT), and 404 to 482 (ANLF…LKRS). Residues 183 to 210 (VKFADTQKDKEQKRMTQQLQQQMQQLNA) are necessary for oligomerization and EDEN-dependent deadenylation.

It belongs to the CELF/BRUNOL family. As to quaternary structure, oligomer. Oligomerization is required for RNA-binding and EDEN-dependent deadenylation. Post-translationally, phosphorylated during oocyte maturation and dephosphorylated following egg activation. Dephosphorylation is calcium dependent and correlates with the increase in the activity of EDEN-dependent deadenylation.

It localises to the nucleus. The protein localises to the cytoplasm. In terms of biological role, RNA-binding protein implicated in the regulation of several post-transcriptional events. May be involved in pre-mRNA alternative splicing, mRNA translation activation and stability. Mediates the rapid and sequence-specific cytoplasmic deadenylation of EDEN-containing maternal mRNAs following fertilization. Binds to AU-rich sequences (AREs) of jun mRNA. Binds to the embryonic deadenylation element (EDEN) motif localized in the 3'-UTR of maternal mRNAs. Binds to RNA containing several repeats of the consensus sequence 5'-UGU-3'. EDEN-dependent deadenylation is enhanced by the presence of an additional cis element composed of three AUU repeats. The sequence is that of CUGBP Elav-like family member 1-A (cugbp1-a) from Xenopus laevis (African clawed frog).